The following is a 122-amino-acid chain: Acidic phospholipase A2 A' (122 aa).

7 cysteine pairs are disulfide-bonded: cysteine 26-cysteine 115, cysteine 28-cysteine 44, cysteine 43-cysteine 95, cysteine 49-cysteine 122, cysteine 50-cysteine 88, cysteine 57-cysteine 81, and cysteine 75-cysteine 86. Positions 27, 29, and 31 each coordinate Ca(2+). The active site involves histidine 47. Aspartate 48 contributes to the Ca(2+) binding site. Aspartate 89 is an active-site residue.

This sequence belongs to the phospholipase A2 family. Group II subfamily. D49 sub-subfamily. The cofactor is Ca(2+). In terms of tissue distribution, expressed by the venom gland.

It is found in the secreted. It catalyses the reaction a 1,2-diacyl-sn-glycero-3-phosphocholine + H2O = a 1-acyl-sn-glycero-3-phosphocholine + a fatty acid + H(+). Its function is as follows. PLA2 catalyzes the calcium-dependent hydrolysis of the 2-acyl groups in 3-sn-phosphoglycerides. The protein is Acidic phospholipase A2 A' of Gloydius halys (Chinese water mocassin).